Consider the following 513-residue polypeptide: MAKPHETILVLDFGGQYNQLIARRVRELHVYCEMHPYTISVDAIREMNPKGIIFTGGPASVYEEKAPAVDPAIYDLGIPILGICYGMQLMVNQLGGKVGRAESREYGKASLTITASEGPFAGMEGDVQCWMSHGDKVEVLPHGFVGSGKTDHAPFAAMADPVRRFYGVQFHPEVRHTPQGMDMMRNFLFGVCGCTGEWTMENFIEEQVAAIRARVGSGKVLCALSGGVDSSVAALLVHRAVGEQLTCVYVDHGFMRLNESERIIKTFRDELGMNLIAVEASERFMAKVAGVSDPETKRKSIGNEFIRVFEEEAAKLGQVDFLVQGTLYPDVVESGTSTAETIKTHHNVGGLPEDMKFELIEPLRTLFKDEVREVGQRLGLPEDIVWRQPFPGPGLAIRVLGEITKESLDILRHADDIVFQEIKKAGLYRQIWQSFVVLPTTVRSVGVMGDGRTYEYPAILRAVTSDDAMTADWARLPYELLEKISNRIVNEVKGVNRVVYDITSKPPGTIEWE.

The Glutamine amidotransferase type-1 domain occupies 7–197; it reads TILVLDFGGQ…LFGVCGCTGE (191 aa). Cys-84 functions as the Nucleophile in the catalytic mechanism. Residues His-171 and Glu-173 contribute to the active site. The GMPS ATP-PPase domain maps to 198-387; the sequence is WTMENFIEEQ…LGLPEDIVWR (190 aa). Residue 225–231 participates in ATP binding; that stretch reads SGGVDSS.

In terms of assembly, homodimer.

The enzyme catalyses XMP + L-glutamine + ATP + H2O = GMP + L-glutamate + AMP + diphosphate + 2 H(+). It participates in purine metabolism; GMP biosynthesis; GMP from XMP (L-Gln route): step 1/1. In terms of biological role, catalyzes the synthesis of GMP from XMP. The polypeptide is GMP synthase [glutamine-hydrolyzing] (Heliobacterium modesticaldum (strain ATCC 51547 / Ice1)).